Consider the following 403-residue polypeptide: MDRSKENCISGPVKATAPVGGPKRVLVTQQFPCQNPLPVNSGQAQRVLCPSNSSQRIPLQAQKLVSSHKPVQNQKQKQLQATSVPHPVSRPLNNTQKSKQPLPSAPENNPEEELASKQKNEESKKRQWALEDFEIGRPLGKGKFGNVYLAREKQSKFILALKVLFKAQLEKAGVEHQLRREVEIQSHLRHPNILRLYGYFHDATRVYLILEYAPLGTVYRELQKLSKFDEQRTATYITELANALSYCHSKRVIHRDIKPENLLLGSAGELKIADFGWSVHAPSSRRTTLCGTLDYLPPEMIEGRMHDEKVDLWSLGVLCYEFLVGKPPFEANTYQETYKRISRVEFTFPDFVTEGARDLISRLLKHNPSQRPMLREVLEHPWITANSSKPSNCQNKESASKQS.

A disordered region spans residues 1–125; that stretch reads MDRSKENCIS…SKQKNEESKK (125 aa). Polar residues-rich tracts occupy residues 27–83 and 91–101; these read VTQQ…QATS and PLNNTQKSKQP. Phosphoserine is present on residues Ser41 and Ser51. Residues 114 to 125 show a composition bias toward basic and acidic residues; sequence LASKQKNEESKK. The region spanning 133–383 is the Protein kinase domain; it reads FEIGRPLGKG…LREVLEHPWI (251 aa). ATP contacts are provided by residues Lys143, Lys162, and 211–213; that span reads EYA. Asp256 functions as the Proton acceptor in the catalytic mechanism. A Glycyl lysine isopeptide (Lys-Gly) (interchain with G-Cter in SUMO2) cross-link involves residue Lys258. ATP is bound by residues 260–261 and Asp274; that span reads EN. The interval 280 to 293 is activation segment; it reads HAPSSRRTTLCGTL. A phosphothreonine mark is found at Thr287 and Thr288. Ser342 carries the post-translational modification Phosphoserine; by PKA and PAK.

This sequence belongs to the protein kinase superfamily. Ser/Thr protein kinase family. Aurora subfamily. Part of a complex composed of NEDD9, AURKA and CTTN; within the complex NEDD9 acts as a scaffold protein and is required for complex formation. Identified in a complex with AUNIP and NIN. Interacts with FBXL7. Interacts with CPEB1, JTB, TACC1, TPX2, PPP2CA, as well as with the protein phosphatase type 1 (PP1) isoforms PPP1CA, PPP1CB and PPP1CC. Also interacts with its substrates ARHGEF2, BORA, KIF2A, PARD3, and p53/TP53. Interaction with BORA promotes phosphorylation of PLK1. Interacts with CIMAP3. Interacts with GADD45A, competing with its oligomerization. Interacts (via C-terminus) with AUNIP (via C-terminus). Interacts with FRY; this interaction facilitates AURKA-mediated PLK1 phosphorylation. Interacts with SIRT2. Interacts with MYCN; interaction is phospho-independent and triggers AURKA activation; AURKA competes with FBXW7 for binding to unphosphorylated MYCN but not for binding to phosphorylated MYCN. Interacts with HNRNPU. Interacts with AAAS. Interacts with KLHL18 and CUL3. Interacts with FOXP1. Interacts with HDAC6; AURKA-mediated phosphorylation of HDAC6 promotes deacetylation of alpha-tubulin. Activated by phosphorylation at Thr-288; this brings about a change in the conformation of the activation segment. Phosphorylation at Thr-288 varies during the cell cycle and is highest during M phase. Autophosphorylated at Thr-288 upon TPX2 binding. Thr-288 can be phosphorylated by several kinases, including PAK and PKA. Protein phosphatase type 1 (PP1) binds AURKA and inhibits its activity by dephosphorylating Thr-288 during mitosis. Phosphorylation at Ser-342 decreases the kinase activity. PPP2CA controls degradation by dephosphorylating Ser-51 at the end of mitosis. In terms of processing, ubiquitinated by the E3 ubiquitin-protein ligase complex SCF(FBXL7) during mitosis, leading to its degradation by the proteasome. Ubiquitinated by CHFR, leading to its degradation by the proteasome. Ubiquitinated by the anaphase-promoting complex (APC), leading to its degradation by the proteasome. Ubiquitinated by the CUL3-KLHL18 ligase leading to its activation at the centrosome which is required for initiating mitotic entry. Ubiquitination mediated by CUL3-KLHL18 ligase does not lead to its degradation by the proteasome. Highly expressed in testis and weakly in skeletal muscle, thymus and spleen. Also highly expressed in colon, ovarian, prostate, neuroblastoma, breast and cervical cancer cell lines.

The protein resides in the cytoplasm. It is found in the cytoskeleton. Its subcellular location is the microtubule organizing center. The protein localises to the centrosome. It localises to the spindle pole. The protein resides in the centriole. It is found in the cell projection. Its subcellular location is the neuron projection. The protein localises to the cilium. It localises to the cilium basal body. The protein resides in the basolateral cell membrane. It catalyses the reaction L-seryl-[protein] + ATP = O-phospho-L-seryl-[protein] + ADP + H(+). It carries out the reaction L-threonyl-[protein] + ATP = O-phospho-L-threonyl-[protein] + ADP + H(+). Its activity is regulated as follows. Activation of CDK1, appears to be an upstream event of AURKA activation. Phosphatase inhibitor-2 (PPP1R2) and TPX2 act also as activators. Inactivated by the G2 checkpoint. Inhibited by GADD45A and p53/TP53, and through dephosphorylation by protein phosphatase type 1 (PP1). MLN8054 is also a potent and selective inhibitor. Activated during the early phase of cilia disassembly in the presence of CIMAP3. Inhibited by the small molecule inhibitor VX-680. Functionally, mitotic serine/threonine kinase that contributes to the regulation of cell cycle progression. Associates with the centrosome and the spindle microtubules during mitosis and plays a critical role in various mitotic events including the establishment of mitotic spindle, centrosome duplication, centrosome separation as well as maturation, chromosomal alignment, spindle assembly checkpoint, and cytokinesis. Required for normal spindle positioning during mitosis and for the localization of NUMA1 and DCTN1 to the cell cortex during metaphase. Required for initial activation of CDK1 at centrosomes. Phosphorylates numerous target proteins, including ARHGEF2, BORA, BRCA1, CDC25B, DLGP5, HDAC6, KIF2A, LATS2, NDEL1, PARD3, PPP1R2, PLK1, RASSF1, TACC3, p53/TP53 and TPX2. Phosphorylates MCRS1 which is required for MCRS1-mediated kinetochore fiber assembly and mitotic progression. Regulates KIF2A tubulin depolymerase activity. Important for microtubule formation and/or stabilization. Required for normal axon formation. Plays a role in microtubule remodeling during neurite extension. Also acts as a key regulatory component of the p53/TP53 pathway, and particularly the checkpoint-response pathways critical for oncogenic transformation of cells, by phosphorylating and destabilizing p53/TP53. Phosphorylates its own inhibitors, the protein phosphatase type 1 (PP1) isoforms, to inhibit their activity. Inhibits cilia outgrowth. Required for cilia disassembly via phosphorylation of HDAC6 and subsequent deacetylation of alpha-tubulin. Regulates protein levels of the anti-apoptosis protein BIRC5 by suppressing the expression of the SCF(FBXL7) E3 ubiquitin-protein ligase substrate adapter FBXL7 through the phosphorylation of the transcription factor FOXP1. The polypeptide is Aurora kinase A (Homo sapiens (Human)).